The following is a 108-amino-acid chain: MSTPRPAPPQPGAAEGAGGPEGKAVAGAWEKGPRLGQRLPSIVVEPSEADPVESGELRWPLESAQRGPSQSRAAAAPSPSLPGEPGKAADNAGSECACSEDPAAPARG.

The span at 1–11 (MSTPRPAPPQP) shows a compositional bias: pro residues. The segment at 1–108 (MSTPRPAPPQ…SEDPAAPARG (108 aa)) is disordered. Residues 37–62 (QRLPSIVVEPSEADPVESGELRWPLE) enclose the LBH domain. Positions 63-85 (SAQRGPSQSRAAAAPSPSLPGEP) are enriched in low complexity.

In Homo sapiens (Human), this protein is LBH domain-containing protein 2.